The primary structure comprises 211 residues: Histone H1t (211 aa).

An N-acetylalanine modification is found at Ala-1. The span at 1–16 shows a compositional bias: low complexity; it reads AETAPAAPADSVPASV. Positions 1 to 42 are disordered; it reads AETAPAAPADSVPASVEKPPAKKRGKKPVGLTGTSRKAPSAS. Polar residues predominate over residues 32–42; that stretch reads TGTSRKAPSAS. The H15 domain occupies 39-112; sequence PSASVSKLIT…GASGSFKLSK (74 aa). Citrulline is present on Arg-57. The interval 101–211 is disordered; sequence GTGASGSFKL…TNPRKATNRK (111 aa). A compositionally biased stretch (basic residues) spans 121-135; sequence GKVKKPAAAKTKKLV. Ser-142 carries the post-translational modification Phosphoserine. The segment covering 147–156 has biased composition (basic residues); sequence KANKRAKKSR. Thr-158 bears the Phosphothreonine mark. 2 positions are modified to phosphoserine: Ser-166 and Ser-181. The span at 176-189 shows a compositional bias: basic residues; it reads KQQRKSPAKARAAK.

The protein belongs to the histone H1/H5 family. In terms of processing, phosphorylated in early spermatids. Post-translationally, citrullination at Arg-57 (H1R54ci) by PADI4 takes place within the DNA-binding site of H1 and results in its displacement from chromatin and global chromatin decondensation, thereby promoting pluripotency and stem cell maintenance. Testis-specific.

The protein resides in the nucleus. It is found in the chromosome. In terms of biological role, testis-specific histone H1 that forms less compacted chromatin compared to other H1 histone subtypes. Formation of more relaxed chromatin may be required to promote chromatin architecture required for proper chromosome regulation during meiosis, such as homologous recombination. Histones H1 act as linkers that bind to nucleosomes and compact polynucleosomes into a higher-order chromatin configuration. In Sus scrofa (Pig), this protein is Histone H1t.